The following is a 1306-amino-acid chain: MTFYNQIVDKGRLKKLISWAYRNYGAARSSQVADNLKDLGFRYATKAGVSISIDDLTVPPTKRGMLDSAEKEINITEARYARGEITEVERFQKVIDTWNSTSEELKDEVVRNFRQTDPLNSVYMMAFSGARGNMSQVRQLVGMRGLMADPQGQIIDQPIKTNFREGLTVTEYVISSYGARKGLVDTALRTADSGYLTRRLVDVSQDVIVREIDCGTRRGLKVTAMKDGDRVKIALGDRLLGRVLAEDVMVGDEVIASRNQSIDAALAAKIGKSVESVMVRSPLTCEAARSVCRCCYGWSLATGRPVDLGEAVGIIAAQSIGEPGTQLTMRTFHTGGVFTGEVAEQIKAPDHGTVKWGKGLSTRKVRTRHGEDAFQVELAGDLIWTPTGSGKKMTYSVTPGSVLFAADGDTVEKDKMLAEVTAAKSTRSTERATKDVSTDLAGEVFFANLIAEEKTDRQGNTTHIAQRGGLVWVLSGEVYNLPPGAEPVVSNGDEVAEGTVLAETKLISVNGGVVRYQPQSREIDIITASVLLDQAEVRKESTGGHEQYVIYTADGQRFLLKATPETKVQNHAIIAELIDDRYQTTTGGMLRYGGIEVAKGSRKTGYEVVQGGTLLWVPEETHEVNKDISLLVVEDGQYVEAGTEVVKDIFCQCSGAIEVVQKNDILREIIIKPGEFHLDVDPDEVSYKNEDLIPPGTEVLPGVVTTDLRQVEWIESTEGLGLLLRPVEEYPVSNEPAAPSQGSINEEEVGRHIELRSVQRLFYKDGERVKSVDGIHLLSTQLVLEIETGSEQAAANLAADIELKNDEEEDCQRLQLVILESLILRRDLDTDPHGGTITTSVLVTDGDQIAPGAVVAKTEIQCREEGEVRGIRRGLEAVRRVLIVRDEDLEIITLKEKPTVAKDDLIVAGTEFAPGVVAAESGLVVAVNQGEEGYEIKLRLARPYRVSPGAILHIADGDLVQRGDNLVLLVYERAKTGDIIQGLPRIEELLEARKPKEACVLSRKPGVCQVEYLEDESVDVKVIEDDGTVSEYPILLNQNVIVSDNQRVDVGEHLTDGPANPHELLEVFFDYYVDKKGVYEAALIGLQAAQKFLVDQVQSVYQSQGIDISDKHIEVIVRQMTAKVRVDDGGDTTMLPGELVELRQIEQVNEAMAITGGAPARYTPVLLGITKASLNTDSFISAASFQETTRVLTEAAIEGKSDWLRGLKENVIIGRLIPAGTGFNAHEEMVMGTLDNGEDSLNNRYGQGERDNNNSDKKPPNRLIGATLDEVDENMILDDNIARAYTEADPPWSVESKQEKDDDDDK.

Residues Cys-214, Cys-285, Cys-292, and Cys-295 each coordinate Zn(2+). Disordered stretches follow at residues 1234 to 1263 (LDNGEDSLNNRYGQGERDNNNSDKKPPNRL) and 1281 to 1306 (IARAYTEADPPWSVESKQEKDDDDDK). Over residues 1247–1259 (QGERDNNNSDKKP) the composition is skewed to basic and acidic residues.

It belongs to the RNA polymerase beta' chain family. RpoC2 subfamily. In terms of assembly, in cyanobacteria the RNAP catalytic core is composed of 2 alpha, 1 beta, 1 beta', 1 gamma and 1 omega subunit. When a sigma factor is associated with the core the holoenzyme is formed, which can initiate transcription. Requires Zn(2+) as cofactor.

It carries out the reaction RNA(n) + a ribonucleoside 5'-triphosphate = RNA(n+1) + diphosphate. DNA-dependent RNA polymerase catalyzes the transcription of DNA into RNA using the four ribonucleoside triphosphates as substrates. In Crocosphaera subtropica (strain ATCC 51142 / BH68) (Cyanothece sp. (strain ATCC 51142)), this protein is DNA-directed RNA polymerase subunit beta'.